Consider the following 295-residue polypeptide: Protoheme IX farnesyltransferase 2 (295 aa).

The next 9 membrane-spanning stretches (helical) occupy residues Ile-9–Ala-29, Phe-36–Phe-56, Leu-83–Val-103, Leu-108–Leu-128, Gly-135–Ser-155, Val-163–Phe-183, Ile-209–Ala-229, Gly-230–Gly-250, and Val-264–Gln-284.

Belongs to the UbiA prenyltransferase family. Protoheme IX farnesyltransferase subfamily.

It is found in the cell inner membrane. It carries out the reaction heme b + (2E,6E)-farnesyl diphosphate + H2O = Fe(II)-heme o + diphosphate. Its pathway is porphyrin-containing compound metabolism; heme O biosynthesis; heme O from protoheme: step 1/1. Its function is as follows. Converts heme B (protoheme IX) to heme O by substitution of the vinyl group on carbon 2 of heme B porphyrin ring with a hydroxyethyl farnesyl side group. This chain is Protoheme IX farnesyltransferase 2, found in Pseudomonas putida (strain ATCC 47054 / DSM 6125 / CFBP 8728 / NCIMB 11950 / KT2440).